A 632-amino-acid polypeptide reads, in one-letter code: Polyadenylate-binding protein, cytoplasmic and nuclear (632 aa).

A compositionally biased stretch (polar residues) spans 1–11; that stretch reads MSAADANQLQE. Residues 1–43 are disordered; it reads MSAADANQLQESLEKLNLDSAPAAAEEEAVAAESAPAGEEGAD. Over residues 31-43 the composition is skewed to low complexity; that stretch reads AAESAPAGEEGAD. 4 consecutive RRM domains span residues 52 to 130, 140 to 217, 233 to 310, and 336 to 413; these read ASLY…WSQR, GNIF…KHIS, TNIY…RAQK, and VNLF…LAQR. The 82-residue stretch at 534-615 folds into the PABC domain; that stretch reads QQRDLAAIIA…ALTAFEEYKN (82 aa).

Belongs to the polyadenylate-binding protein type-1 family.

It is found in the cytoplasm. Its subcellular location is the nucleus. Binds the poly(A) tail of mRNA. Appears to be an important mediator of the multiple roles of the poly(A) tail in mRNA biogenesis, stability and translation. In the nucleus, involved in both mRNA cleavage and polyadenylation. Is also required for efficient mRNA export to the cytoplasm. Acts in concert with a poly(A)-specific nuclease (PAN) to affect poly(A) tail shortening, which may occur concomitantly with either nucleocytoplasmic mRNA transport or translational initiation. In the cytoplasm, stimulates translation initiation and regulates mRNA decay through translation termination-coupled poly(A) shortening, probably mediated by PAN. The polypeptide is Polyadenylate-binding protein, cytoplasmic and nuclear (PAB1) (Scheffersomyces stipitis (strain ATCC 58785 / CBS 6054 / NBRC 10063 / NRRL Y-11545) (Yeast)).